The primary structure comprises 606 residues: Large subunit GTPase 1 homolog (606 aa).

Positions 1 to 21 are disordered; sequence MGKKNKGGAPNLGRQLIKDRF. In terms of domain architecture, CP-type G spans 165 to 395; it reads WRQLWRVVER…LCDCPGLVMP (231 aa). 213-216 serves as a coordination point for GTP; the sequence is NKSD. Phosphoserine is present on residues Ser-276 and Ser-279. Residues 344-351 and 388-391 each bind GTP; these read GYPNVGKS and DCPG. The interval 574-606 is disordered; sequence LVAGNDPAAKPWRHVKKERREKLRKKFSHLDEH. Positions 584-600 are enriched in basic residues; the sequence is PWRHVKKERREKLRKKF.

It belongs to the TRAFAC class YlqF/YawG GTPase family. LSG1 subfamily. In terms of tissue distribution, expressed in larval serotonergic neurons.

It localises to the cytoplasm. In terms of biological role, GTPase required for the nuclear export of the 60S ribosomal subunit. Probably acts by mediating the release of Nmd3 from the 60S ribosomal subunit after export into the cytoplasm. Regulator of body size; acts in serotonergic neurons to regulate insulin signaling and thus exerts global growth control. The sequence is that of Large subunit GTPase 1 homolog (Ns3) from Drosophila melanogaster (Fruit fly).